The primary structure comprises 198 residues: Ribonuclease HII (198 aa).

In terms of domain architecture, RNase H type-2 spans 10–198; sequence QLVAGVDEVG…PVKRALGLAS (189 aa). Residues Asp16, Glu17, and Asp108 each coordinate a divalent metal cation.

The protein belongs to the RNase HII family. Requires Mn(2+) as cofactor. Mg(2+) serves as cofactor.

It localises to the cytoplasm. It carries out the reaction Endonucleolytic cleavage to 5'-phosphomonoester.. Its function is as follows. Endonuclease that specifically degrades the RNA of RNA-DNA hybrids. This is Ribonuclease HII from Escherichia coli O6:H1 (strain CFT073 / ATCC 700928 / UPEC).